The chain runs to 201 residues: Potassium-transporting ATPase KdpC subunit (201 aa).

A helical membrane pass occupies residues 7–29; the sequence is PALVLLTALTAITGLAYPLAMTG.

This sequence belongs to the KdpC family. In terms of assembly, the system is composed of three essential subunits: KdpA, KdpB and KdpC.

The protein resides in the cell inner membrane. In terms of biological role, part of the high-affinity ATP-driven potassium transport (or Kdp) system, which catalyzes the hydrolysis of ATP coupled with the electrogenic transport of potassium into the cytoplasm. This subunit acts as a catalytic chaperone that increases the ATP-binding affinity of the ATP-hydrolyzing subunit KdpB by the formation of a transient KdpB/KdpC/ATP ternary complex. In Methylobacterium radiotolerans (strain ATCC 27329 / DSM 1819 / JCM 2831 / NBRC 15690 / NCIMB 10815 / 0-1), this protein is Potassium-transporting ATPase KdpC subunit.